We begin with the raw amino-acid sequence, 371 residues long: N-acetyldiaminopimelate deacetylase (371 aa).

Aspartate 68 is a catalytic residue. The Proton acceptor role is filled by glutamate 127.

It belongs to the peptidase M20A family. N-acetyldiaminopimelate deacetylase subfamily.

The catalysed reaction is N-acetyl-(2S,6S)-2,6-diaminopimelate + H2O = (2S,6S)-2,6-diaminopimelate + acetate. The protein operates within amino-acid biosynthesis; L-lysine biosynthesis via DAP pathway; LL-2,6-diaminopimelate from (S)-tetrahydrodipicolinate (acetylase route): step 3/3. Its function is as follows. Catalyzes the conversion of N-acetyl-diaminopimelate to diaminopimelate and acetate. The sequence is that of N-acetyldiaminopimelate deacetylase from Listeria innocua serovar 6a (strain ATCC BAA-680 / CLIP 11262).